The chain runs to 352 residues: MARTMTMRVSSLLVAVVLLAALSFQACSGHGGINDGDGQVDAPATPASSSGVRSKGLIAVKVWCLVILLVFTFAGGVSPYFYRWNESFLLLGTQFAAGVFLGTALMHFLADSTSTFKGLTTNQYPFSFMLTCVGFLLTMLSDLVIAAVARRSAAAGVSDNQVSEQQQRQQAEGAVMSRKEEEAAAVAHPAMLVRTSSFEDAVLLIVALCFHSVFEGIAIGVSASKSEAWRNLWTIGLHKIFAAVAMGIALLRMIPKRPFLMTVVYSLAFAVSSPVGVGIGIAIDATSQGRAADWTYAISMGLATGVFIYVAINHLIAKGYRPHHPTAADKPLFKFLAVLLGVAVMAVVMIWD.

The signal sequence occupies residues 1 to 29; sequence MARTMTMRVSSLLVAVVLLAALSFQACSG. The Extracellular portion of the chain corresponds to 30-56; that stretch reads HGGINDGDGQVDAPATPASSSGVRSKG. A helical membrane pass occupies residues 57 to 77; it reads LIAVKVWCLVILLVFTFAGGV. Residues 78 to 87 are Cytoplasmic-facing; sequence SPYFYRWNES. A helical membrane pass occupies residues 88–108; sequence FLLLGTQFAAGVFLGTALMHF. At 109-127 the chain is on the extracellular side; it reads LADSTSTFKGLTTNQYPFS. A helical membrane pass occupies residues 128 to 148; it reads FMLTCVGFLLTMLSDLVIAAV. Residues 149 to 200 lie on the Cytoplasmic side of the membrane; the sequence is ARRSAAAGVSDNQVSEQQQRQQAEGAVMSRKEEEAAAVAHPAMLVRTSSFED. A helical transmembrane segment spans residues 201–221; sequence AVLLIVALCFHSVFEGIAIGV. The Extracellular portion of the chain corresponds to 222 to 230; it reads SASKSEAWR. A helical transmembrane segment spans residues 231–251; sequence NLWTIGLHKIFAAVAMGIALL. Residues 252-262 are Cytoplasmic-facing; sequence RMIPKRPFLMT. Residues 263–283 traverse the membrane as a helical segment; the sequence is VVYSLAFAVSSPVGVGIGIAI. At 284–296 the chain is on the extracellular side; the sequence is DATSQGRAADWTY. Residues 297 to 317 traverse the membrane as a helical segment; that stretch reads AISMGLATGVFIYVAINHLIA. At 318 to 330 the chain is on the cytoplasmic side; that stretch reads KGYRPHHPTAADK. The chain crosses the membrane as a helical span at residues 331–351; sequence PLFKFLAVLLGVAVMAVVMIW. Position 352 (D352) is a topological domain, extracellular.

The protein belongs to the ZIP transporter (TC 2.A.5) family. Expressed in vascular bundles of roots and leaves.

Its subcellular location is the cell membrane. Zinc transporter that may mediate zinc uptake from the rhizosphere. May also transport other divalent cations. This chain is Zinc transporter 1 (ZIP1), found in Oryza sativa subsp. japonica (Rice).